The primary structure comprises 911 residues: DNA mismatch repair protein MutS (911 aa).

The tract at residues 1-95 is disordered; sequence MALQGNLFGD…PWSHHSQVTP (95 aa). Residues 23–42 show a composition bias toward basic and acidic residues; sequence KRQDEPDQLDDHELTQDAKQ. 727 to 734 contributes to the ATP binding site; that stretch reads GPNASGKS.

Belongs to the DNA mismatch repair MutS family.

This protein is involved in the repair of mismatches in DNA. It is possible that it carries out the mismatch recognition step. This protein has a weak ATPase activity. This is DNA mismatch repair protein MutS from Synechococcus sp. (strain CC9311).